Reading from the N-terminus, the 239-residue chain is Small ribosomal subunit protein uS3 (239 aa).

One can recognise a KH type-2 domain in the interval 39–107 (IREFIKEECK…ELHLNIVEVR (69 aa)). Residues 212 to 221 (PQARDRKAQE) show a composition bias toward basic and acidic residues. Positions 212-239 (PQARDRKAQELQDGPAPRGAGGNRRGDR) are disordered. The segment covering 230-239 (GAGGNRRGDR) has biased composition (gly residues).

It belongs to the universal ribosomal protein uS3 family. As to quaternary structure, part of the 30S ribosomal subunit. Forms a tight complex with proteins S10 and S14.

Functionally, binds the lower part of the 30S subunit head. Binds mRNA in the 70S ribosome, positioning it for translation. In Ruegeria sp. (strain TM1040) (Silicibacter sp.), this protein is Small ribosomal subunit protein uS3.